The chain runs to 340 residues: Photosystem II protein D1 (340 aa).

The next 3 membrane-spanning stretches (helical) occupy residues 25–42 (YIGW…LATV), 114–129 (HFFL…EWEF), and 138–152 (WIFV…AAAA). Residue His114 coordinates chlorophyll a. Trp122 is a binding site for pheophytin a. [CaMn4O5] cluster contacts are provided by Asp166 and Glu185. A helical membrane pass occupies residues 193 to 214 (FHILGVAGVFGGSLFSAMHGSL). His194 serves as a coordination point for chlorophyll a. A quinone-binding positions include His211 and 260 to 261 (SF). A Fe cation-binding site is contributed by His211. His268 is a Fe cation binding site. Residues 270-284 (FLAAWPVIGIWITSL) traverse the membrane as a helical segment. The [CaMn4O5] cluster site is built by His328, Glu329, Asp338, and Ala340.

Belongs to the reaction center PufL/M/PsbA/D family. In terms of assembly, PSII is composed of 1 copy each of membrane proteins PsbA, PsbB, PsbC, PsbD, PsbE, PsbF, PsbH, PsbI, PsbJ, PsbK, PsbL, PsbM, PsbT, PsbX, PsbY, PsbZ, Psb30/Ycf12, at least 3 peripheral proteins of the oxygen-evolving complex and a large number of cofactors. It forms dimeric complexes. The cofactor is The D1/D2 heterodimer binds P680, chlorophylls that are the primary electron donor of PSII, and subsequent electron acceptors. It shares a non-heme iron and each subunit binds pheophytin, quinone, additional chlorophylls, carotenoids and lipids. D1 provides most of the ligands for the Mn4-Ca-O5 cluster of the oxygen-evolving complex (OEC). There is also a Cl(-1) ion associated with D1 and D2, which is required for oxygen evolution. The PSII complex binds additional chlorophylls, carotenoids and specific lipids.. In terms of processing, tyr-157 forms a radical intermediate that is referred to as redox-active TyrZ, YZ or Y-Z.

Its subcellular location is the plastid. The protein resides in the chloroplast thylakoid membrane. It carries out the reaction 2 a plastoquinone + 4 hnu + 2 H2O = 2 a plastoquinol + O2. Its function is as follows. Photosystem II (PSII) is a light-driven water:plastoquinone oxidoreductase that uses light energy to abstract electrons from H(2)O, generating O(2) and a proton gradient subsequently used for ATP formation. It consists of a core antenna complex that captures photons, and an electron transfer chain that converts photonic excitation into a charge separation. The D1/D2 (PsbA/PsbD) reaction center heterodimer binds P680, the primary electron donor of PSII as well as several subsequent electron acceptors. This is Photosystem II protein D1 from Amphidinium carterae (Dinoflagellate).